The primary structure comprises 525 residues: uncharacterized protein (525 aa).

Residues 1–21 (MLECLSALLVLFAGGGGSVLA) form the signal peptide. Residues 22-448 (AVQSKTVADP…ISAASQLDER (427 aa)) lie on the Extracellular side of the membrane. The tract at residues 242-264 (KVSSENCSKDTDDKSGSKKERNT) is disordered. Residues 449–469 (IFIFTAITVSITTLMMLGFSY) traverse the membrane as a helical segment. Over 470–525 (RSRVSFRDHSIDDSDDDNDWSDDEVEFDEEYFYSLPVSIPEKGISLDKMAQQLGVE) the chain is Cytoplasmic.

The protein localises to the membrane. This is an uncharacterized protein from Saccharomyces cerevisiae (strain RM11-1a) (Baker's yeast).